Reading from the N-terminus, the 501-residue chain is ADP,ATP carrier protein 3 (501 aa).

The next 12 helical transmembrane spans lie at leucine 23–leucine 43, isoleucine 59–tyrosine 79, tyrosine 90–isoleucine 110, tyrosine 146–tryptophan 166, proline 183–phenylalanine 203, isoleucine 227–phenylalanine 247, isoleucine 293–alanine 313, valine 326–isoleucine 346, leucine 361–isoleucine 381, glutamate 383–isoleucine 403, phenylalanine 446–threonine 466, and isoleucine 470–isoleucine 490.

This sequence belongs to the ADP/ATP translocase tlc family.

The protein localises to the cell membrane. Its function is as follows. Provides the rickettsial cell with host ATP in exchange for rickettsial ADP. This is an obligate exchange system. This energy acquiring activity is an important component of rickettsial parasitism. The chain is ADP,ATP carrier protein 3 (tlcC) from Rickettsia typhi (strain ATCC VR-144 / Wilmington).